A 525-amino-acid polypeptide reads, in one-letter code: GMP synthase [glutamine-hydrolyzing] (525 aa).

One can recognise a Glutamine amidotransferase type-1 domain in the interval 8–207; sequence KILILDFGSQ…ALEICACAAN (200 aa). Catalysis depends on Cys-85, which acts as the Nucleophile. Catalysis depends on residues His-181 and Glu-183. The region spanning 208 to 400 is the GMPS ATP-PPase domain; the sequence is WKPASIIEDA…LGLPYNMLYR (193 aa). Residue 235–241 coordinates ATP; the sequence is SGGVDSS.

In terms of assembly, homodimer.

It catalyses the reaction XMP + L-glutamine + ATP + H2O = GMP + L-glutamate + AMP + diphosphate + 2 H(+). Its pathway is purine metabolism; GMP biosynthesis; GMP from XMP (L-Gln route): step 1/1. Its function is as follows. Catalyzes the synthesis of GMP from XMP. The chain is GMP synthase [glutamine-hydrolyzing] from Shewanella halifaxensis (strain HAW-EB4).